A 337-amino-acid chain; its full sequence is Calcium-binding protein 39-like (337 aa).

The protein belongs to the Mo25 family. As to quaternary structure, component of a trimeric complex composed of STK11/LKB1, STRAD (STRADA or STRADB) and CAB39/MO25 (CAB39/MO25alpha or CAB39L/MO25beta): the complex tethers STK11/LKB1 in the cytoplasm and stimulates its catalytic activity.

Its function is as follows. Component of a complex that binds and activates STK11/LKB1. In the complex, required to stabilize the interaction between CAB39/MO25 (CAB39/MO25alpha or CAB39L/MO25beta) and STK11/LKB1. This chain is Calcium-binding protein 39-like (CAB39L), found in Homo sapiens (Human).